Consider the following 244-residue polypeptide: Protein DMP9 (244 aa).

Residues 1–56 (MEKTEESVGIRVYTATPPQKPSPSPPSRSPKPVLISSLPSLPSGAAAGGGRGRKRR) form a disordered region. Over residues 18–29 (PQKPSPSPPSRS) the composition is skewed to pro residues. Over residues 30 to 45 (PKPVLISSLPSLPSGA) the composition is skewed to low complexity. A run of 4 helical transmembrane segments spans residues 71-91 (MLVNFLPTGTLLMFEMVLPSI), 99-119 (GINTLMIHLLLLLCAMSCFFF), 173-193 (LTVNDFVHAVMSVLVFMAIAF), and 213-233 (VMESFPIMVGIVCSALFLVFP).

Belongs to the plant DMP1 protein family. In terms of tissue distribution, restricted to flowers and pollen.

Its subcellular location is the endoplasmic reticulum membrane. The protein resides in the vacuole membrane. Involved in membrane remodeling. This chain is Protein DMP9, found in Arabidopsis thaliana (Mouse-ear cress).